The sequence spans 394 residues: Elongation factor Tu (394 aa).

The tr-type G domain maps to 10–204 (KPHVNIGTIG…AVDSWIPLPE (195 aa)). Positions 19–26 (GHVDHGKT) are G1. Position 19-26 (19-26 (GHVDHGKT)) interacts with GTP. Thr26 is a Mg(2+) binding site. The G2 stretch occupies residues 60-64 (GITIN). The segment at 81–84 (DCPG) is G3. Residues 81-85 (DCPGH) and 136-139 (NKCD) each bind GTP. Positions 136–139 (NKCD) are G4. Residues 174-176 (SGL) form a G5 region.

This sequence belongs to the TRAFAC class translation factor GTPase superfamily. Classic translation factor GTPase family. EF-Tu/EF-1A subfamily. Monomer.

Its subcellular location is the cytoplasm. The enzyme catalyses GTP + H2O = GDP + phosphate + H(+). GTP hydrolase that promotes the GTP-dependent binding of aminoacyl-tRNA to the A-site of ribosomes during protein biosynthesis. The sequence is that of Elongation factor Tu from Ureaplasma urealyticum serovar 10 (strain ATCC 33699 / Western).